Here is a 347-residue protein sequence, read N- to C-terminus: Protein-glutamate methylesterase/protein-glutamine glutaminase 4 (347 aa).

The Response regulatory domain occupies 3–121 (KVLIVDDSAS…HPNHEREARS (119 aa)). A 4-aspartylphosphate modification is found at D54. Residues 157-342 (PARLKAVAIG…PDRIVTALTS (186 aa)) form the CheB-type methylesterase domain. Active-site residues include S168, H195, and D289.

Belongs to the CheB family. Post-translationally, phosphorylated by CheA. Phosphorylation of the N-terminal regulatory domain activates the methylesterase activity.

The protein localises to the cytoplasm. It catalyses the reaction [protein]-L-glutamate 5-O-methyl ester + H2O = L-glutamyl-[protein] + methanol + H(+). The enzyme catalyses L-glutaminyl-[protein] + H2O = L-glutamyl-[protein] + NH4(+). Involved in chemotaxis. Part of a chemotaxis signal transduction system that modulates chemotaxis in response to various stimuli. Catalyzes the demethylation of specific methylglutamate residues introduced into the chemoreceptors (methyl-accepting chemotaxis proteins or MCP) by CheR. Also mediates the irreversible deamidation of specific glutamine residues to glutamic acid. This is Protein-glutamate methylesterase/protein-glutamine glutaminase 4 from Geobacter metallireducens (strain ATCC 53774 / DSM 7210 / GS-15).